We begin with the raw amino-acid sequence, 431 residues long: RbAp48-related WD40 repeat-containing protein prw1 (431 aa).

6 WD repeats span residues Ser127–Asp159, Lys182–Asp213, Ser232–Asp263, Ala279–Asp310, Gly323–Asp354, and Gly380–Thr411.

This sequence belongs to the WD repeat HIR1 family. In terms of assembly, heterotetramer of alp13, clr6, prw1 and pst2.

Its subcellular location is the nucleus. In terms of biological role, has a role in chromatin assembly and chromosome segregation. Involved in the deacetylation of histones. This chain is RbAp48-related WD40 repeat-containing protein prw1 (prw1), found in Schizosaccharomyces pombe (strain 972 / ATCC 24843) (Fission yeast).